The sequence spans 261 residues: MVSWIISRAVVLVFGLLYPAYASYKAVKTKNVREYVRWMMYWIVFALFMTVETFTDIFIAWFPFYYEIKMAFVVWLLSPYTRGASLLYRKCIHPTLSLKEKEIDSYIIQAKERSYESFVNIGRKGLNIAASAAVQAATKGQGALVGRLRSFSMQDLRALPDDTPIHYRDALYPDAPELHRRPIGYPTTSHADSDSMDERWSDSEMAETRTAARTRGGMPSKPLQRSQSLRVSKKKGLSREVSTKTTKPKGKKKPAQSEPEN.

A run of 2 helical transmembrane segments spans residues 1-21 (MVSWIISRAVVLVFGLLYPAY) and 35-55 (YVRWMMYWIVFALFMTVETFT). The segment at 177 to 261 (ELHRRPIGYP…KKPAQSEPEN (85 aa)) is disordered. Basic and acidic residues predominate over residues 191-202 (ADSDSMDERWSD).

The protein belongs to the DP1 family. Interacts with microtubules. In terms of tissue distribution, during gastrulation, expressed on the dorsal side of the embryo and then in the neural plate and neural tube. At tailbud stages, expressed in the somites. Expressed in the neural tube later in development.

It is found in the endoplasmic reticulum membrane. Functionally, microtubule-binding protein required to ensure proper cell division and nuclear envelope reassembly by sequestering the endoplasmic reticulum away from chromosomes during mitosis. Probably acts by clearing the endoplasmic reticulum membrane from metaphase chromosomes. May play a role in the maintenance of both the nervous system and the musculature. This chain is Receptor expression-enhancing protein 4 (reep4), found in Xenopus tropicalis (Western clawed frog).